The sequence spans 436 residues: Trigger factor (436 aa).

Positions glycine 164–proline 249 constitute a PPIase FKBP-type domain.

Belongs to the FKBP-type PPIase family. Tig subfamily.

Its subcellular location is the cytoplasm. The enzyme catalyses [protein]-peptidylproline (omega=180) = [protein]-peptidylproline (omega=0). In terms of biological role, involved in protein export. Acts as a chaperone by maintaining the newly synthesized protein in an open conformation. Functions as a peptidyl-prolyl cis-trans isomerase. This chain is Trigger factor, found in Limosilactobacillus reuteri (strain DSM 20016) (Lactobacillus reuteri).